We begin with the raw amino-acid sequence, 79 residues long: NAD(P)H-quinone oxidoreductase subunit L (79 aa).

2 helical membrane passes run 10 to 30 (IIIALIYLSLSVLYLLVIPAV) and 48 to 68 (GFMYFLMSFFFPGMLLLSPFL).

The protein belongs to the complex I NdhL subunit family. As to quaternary structure, NDH-1 can be composed of about 15 different subunits; different subcomplexes with different compositions have been identified which probably have different functions.

Its subcellular location is the cellular thylakoid membrane. It carries out the reaction a plastoquinone + NADH + (n+1) H(+)(in) = a plastoquinol + NAD(+) + n H(+)(out). It catalyses the reaction a plastoquinone + NADPH + (n+1) H(+)(in) = a plastoquinol + NADP(+) + n H(+)(out). In terms of biological role, NDH-1 shuttles electrons from an unknown electron donor, via FMN and iron-sulfur (Fe-S) centers, to quinones in the respiratory and/or the photosynthetic chain. The immediate electron acceptor for the enzyme in this species is believed to be plastoquinone. Couples the redox reaction to proton translocation, and thus conserves the redox energy in a proton gradient. Cyanobacterial NDH-1 also plays a role in inorganic carbon-concentration. This is NAD(P)H-quinone oxidoreductase subunit L from Microcystis aeruginosa (strain NIES-843 / IAM M-2473).